Reading from the N-terminus, the 121-residue chain is Small ribosomal subunit protein uS13 (121 aa).

A disordered region spans residues 92–121 (HKAGLPVRGQKTHSNARTRKGPRLTKIKKR). Basic residues predominate over residues 101–121 (QKTHSNARTRKGPRLTKIKKR).

It belongs to the universal ribosomal protein uS13 family. As to quaternary structure, part of the 30S ribosomal subunit. Forms a loose heterodimer with protein S19. Forms two bridges to the 50S subunit in the 70S ribosome.

Located at the top of the head of the 30S subunit, it contacts several helices of the 16S rRNA. In the 70S ribosome it contacts the 23S rRNA (bridge B1a) and protein L5 of the 50S subunit (bridge B1b), connecting the 2 subunits; these bridges are implicated in subunit movement. Contacts the tRNAs in the A and P-sites. The chain is Small ribosomal subunit protein uS13 from Petrotoga mobilis (strain DSM 10674 / SJ95).